We begin with the raw amino-acid sequence, 600 residues long: Mediator of RNA polymerase II transcription subunit 26 (600 aa).

The TFIIS N-terminal domain maps to Gln10–Ala87. Disordered stretches follow at residues Gly99 to Glu330, His348 to Tyr402, and Thr431 to Lys461. Residues Ser123 to Leu133 are compositionally biased toward basic and acidic residues. Residues Pro175 to Asp197 show a composition bias toward polar residues. Residues Ser207–Ser218 are compositionally biased toward basic and acidic residues. Over residues Ser314–Pro324 the composition is skewed to pro residues. The span at Glu441–Lys461 shows a compositional bias: basic and acidic residues. 3 positions are modified to phosphoserine: Ser447, Ser470, and Ser535.

The protein belongs to the Mediator complex subunit 26 family. Component of the Mediator complex, which is composed of MED1, MED4, MED6, MED7, MED8, MED9, MED10, MED11, MED12, MED13, MED13L, MED14, MED15, MED16, MED17, MED18, MED19, MED20, MED21, MED22, MED23, MED24, MED25, MED26, MED27, MED29, MED30, MED31, CCNC, CDK8 and CDC2L6/CDK11. The MED12, MED13, CCNC and CDK8 subunits form a distinct module termed the CDK8 module. Mediator containing the CDK8 module is less active than Mediator lacking this module in supporting transcriptional activation. Individual preparations of the Mediator complex lacking one or more distinct subunits have been variously termed ARC, CRSP, DRIP, PC2, SMCC and TRAP. Interacts with CEBPB (when not methylated).

It is found in the nucleus. In terms of biological role, component of the Mediator complex, a coactivator involved in the regulated transcription of nearly all RNA polymerase II-dependent genes. Mediator functions as a bridge to convey information from gene-specific regulatory proteins to the basal RNA polymerase II transcription machinery. Mediator is recruited to promoters by direct interactions with regulatory proteins and serves as a scaffold for the assembly of a functional pre-initiation complex with RNA polymerase II and the general transcription factors. This is Mediator of RNA polymerase II transcription subunit 26 (MED26) from Homo sapiens (Human).